The chain runs to 431 residues: Enolase (431 aa).

(2R)-2-phosphoglycerate is bound at residue glutamine 163. The Proton donor role is filled by glutamate 205. Residues aspartate 242, glutamate 288, and aspartate 315 each coordinate Mg(2+). (2R)-2-phosphoglycerate-binding residues include lysine 340, arginine 369, serine 370, and lysine 391. The Proton acceptor role is filled by lysine 340.

It belongs to the enolase family. Requires Mg(2+) as cofactor.

It is found in the cytoplasm. Its subcellular location is the secreted. It localises to the cell surface. It carries out the reaction (2R)-2-phosphoglycerate = phosphoenolpyruvate + H2O. Its pathway is carbohydrate degradation; glycolysis; pyruvate from D-glyceraldehyde 3-phosphate: step 4/5. Its function is as follows. Catalyzes the reversible conversion of 2-phosphoglycerate (2-PG) into phosphoenolpyruvate (PEP). It is essential for the degradation of carbohydrates via glycolysis. In Latilactobacillus sakei subsp. sakei (strain 23K) (Lactobacillus sakei subsp. sakei), this protein is Enolase.